A 39-amino-acid polypeptide reads, in one-letter code: Decorsin (39 aa).

The interval 27 to 38 is high affinity binding domain; that stretch reads CRFPRGDADPYC. Positions 31–33 match the Cell attachment site motif; that stretch reads RGD.

The protein belongs to the ornatin family.

The protein resides in the secreted. Its function is as follows. Inhibits fibrinogen interaction with platelet receptors expressed on glycoprotein IIb-IIIa complex. May prevent blood from clotting during either feeding and/or storage of ingested blood. The sequence is that of Decorsin from Macrobdella decora (North American leech).